We begin with the raw amino-acid sequence, 157 residues long: Endoribonuclease YbeY (157 aa).

Positions 114, 118, and 124 each coordinate Zn(2+).

Belongs to the endoribonuclease YbeY family. The cofactor is Zn(2+).

The protein resides in the cytoplasm. Its function is as follows. Single strand-specific metallo-endoribonuclease involved in late-stage 70S ribosome quality control and in maturation of the 3' terminus of the 16S rRNA. In Salmonella agona (strain SL483), this protein is Endoribonuclease YbeY.